The chain runs to 231 residues: MSSCMLFFTVIIAGVFMGTIATNYCNLKSCVNYGNIHTMCKYTSSTPASTCSKWEKAGLTDAEKKTIVTLHNQLRRKVAAGKETRGNPGPQPAAATMPDLTWDNELAMVAQRWANQCKYGHDACRNIERFQVGQNVAIRGSTGENLSTVDQMILSWYSEVDLMNKKYVSSFPKDDTYKKIGHYTQIVYGNTKTIGCGRIFYKDGKWNQQYLVCNYGPAGNYPNAPVYQIKQ.

Positions 1–21 (MSSCMLFFTVIIAGVFMGTIA) are cleaved as a signal peptide. Cystine bridges form between C25–C40, C30–C124, and C51–C117. One can recognise an SCP domain in the interval 68–215 (VTLHNQLRRK…WNQQYLVCNY (148 aa)). N-linked (GlcNAc...) asparagine glycosylation occurs at N145. Residues C196 and C213 are joined by a disulfide bond.

The protein belongs to the CRISP family. Expressed by the venom gland.

Its subcellular location is the secreted. This Dinoponera quadriceps (South American ant) protein is Venom allergen 3 homolog.